A 381-amino-acid polypeptide reads, in one-letter code: MALKAEGAALDCFEVTLKCEEGEDEEEAMVVAVIPRPEPMLRVTQQEKTPPPRPSPLEAGSDGCEEPKQQVSWEQEFLVGSSPGGSGRALCMVCGAEIRAPSADTARSHILEQHPHTLDLSPSEKSNILEAWSEGVALLQDVRAEQPSPPNSDSGQDAHPDPDANPDAARMPAEIVVLLDSEDNPSLPKRSRPRGLRPLELPAVPATEPGNKKPRGQRWKEPPGEEPVRKKRGRPMTKNLDPDPEPPSPDSPTETFAAPAEVRHFTDGSFPAGFVLQLFSHTQLRGPDSKDSPKDREVAEGGLPRAESPSPAPPPGLRGTLDLQVIRVRMEEPPAVSLLQDWSRHPQGTKRVGAGDTSDWPTVLSESSTTVAGKPEKGNGV.

Residues 42-73 (RVTQQEKTPPPRPSPLEAGSDGCEEPKQQVSW) are disordered. A Glycyl lysine isopeptide (Lys-Gly) (interchain with G-Cter in SUMO2) cross-link involves residue K48. 2 positions are modified to phosphoserine: S121 and S148. 3 disordered regions span residues 144–264 (AEQP…EVRH), 283–320 (QLRG…LRGT), and 339–381 (LQDW…GNGV). Glycyl lysine isopeptide (Lys-Gly) (interchain with G-Cter in SUMO2) cross-links involve residues K189 and K220. A compositionally biased stretch (basic and acidic residues) spans 218-228 (RWKEPPGEEPV). A phosphoserine mark is found at S248 and S251. The span at 287–299 (PDSKDSPKDREVA) shows a compositional bias: basic and acidic residues. Residues K290 and K294 each participate in a glycyl lysine isopeptide (Lys-Gly) (interchain with G-Cter in SUMO2) cross-link. Phosphoserine is present on residues S308 and S310. K374 is covalently cross-linked (Glycyl lysine isopeptide (Lys-Gly) (interchain with G-Cter in SUMO2)).

In terms of assembly, interacts with SPIN1, SPIN2A, SPIN2B, SPIN3 and SPIN4. Interacts with TCF7L2 in a SPIN1-dependent manner. Interacts with PARP1; promoting PARP1 ADP-ribosyltransferase activity.

Its subcellular location is the nucleus. It localises to the chromosome. Functionally, chromatin protein that stabilizes SPIN1 and enhances its association with histone H3 trimethylated at both 'Lys-4' and 'Lys-9' (H3K4me3K9me3). Positively regulates poly-ADP-ribosylation in response to DNA damage; acts by facilitating PARP1 ADP-ribosyltransferase activity. The protein is Spindlin interactor and repressor of chromatin-binding protein of Homo sapiens (Human).